A 90-amino-acid polypeptide reads, in one-letter code: uncharacterized protein (90 aa).

The first 20 residues, 1–20, serve as a signal peptide directing secretion; the sequence is MAYKMLQVVLCSTLLIGALG.

This is an uncharacterized protein from Homo sapiens (Human).